The sequence spans 313 residues: Porphobilinogen deaminase (313 aa).

C241 is modified (S-(dipyrrolylmethanemethyl)cysteine).

Belongs to the HMBS family. As to quaternary structure, monomer. The cofactor is dipyrromethane.

It catalyses the reaction 4 porphobilinogen + H2O = hydroxymethylbilane + 4 NH4(+). It participates in porphyrin-containing compound metabolism; protoporphyrin-IX biosynthesis; coproporphyrinogen-III from 5-aminolevulinate: step 2/4. The protein operates within porphyrin-containing compound metabolism; chlorophyll biosynthesis. Its function is as follows. Tetrapolymerization of the monopyrrole PBG into the hydroxymethylbilane pre-uroporphyrinogen in several discrete steps. The chain is Porphobilinogen deaminase from Chlorobium phaeobacteroides (strain DSM 266 / SMG 266 / 2430).